A 157-amino-acid polypeptide reads, in one-letter code: Transcription elongation factor GreB (157 aa).

The protein belongs to the GreA/GreB family. GreB subfamily.

In terms of biological role, necessary for efficient RNA polymerase transcription elongation past template-encoded arresting sites. The arresting sites in DNA have the property of trapping a certain fraction of elongating RNA polymerases that pass through, resulting in locked ternary complexes. Cleavage of the nascent transcript by cleavage factors such as GreA or GreB allows the resumption of elongation from the new 3'terminus. GreB releases sequences of up to 9 nucleotides in length. In Salmonella typhi, this protein is Transcription elongation factor GreB.